Consider the following 293-residue polypeptide: Glycine--tRNA ligase alpha subunit (293 aa).

It belongs to the class-II aminoacyl-tRNA synthetase family. As to quaternary structure, tetramer of two alpha and two beta subunits.

Its subcellular location is the cytoplasm. It carries out the reaction tRNA(Gly) + glycine + ATP = glycyl-tRNA(Gly) + AMP + diphosphate. This Oceanobacillus iheyensis (strain DSM 14371 / CIP 107618 / JCM 11309 / KCTC 3954 / HTE831) protein is Glycine--tRNA ligase alpha subunit.